The following is a 586-amino-acid chain: Proteasome-associated ATPase (586 aa).

Residues 11-76 are a coiled coil; the sequence is AWRELEAVRA…LREEVDRLGQ (66 aa). Residue 273-278 coordinates ATP; the sequence is GCGKTL. Residues 585–586 form a docks into pockets in the proteasome alpha-ring region; it reads YL.

Belongs to the AAA ATPase family. Homohexamer. Assembles into a hexameric ring structure that caps the 20S proteasome core. Strongly interacts with the prokaryotic ubiquitin-like protein Pup through a hydrophobic interface; the interacting region of ARC lies in its N-terminal coiled-coil domain. There is one Pup binding site per ARC hexamer ring. Upon ATP-binding, the C-terminus of ARC interacts with the alpha-rings of the proteasome core, possibly by binding to the intersubunit pockets.

Its pathway is protein degradation; proteasomal Pup-dependent pathway. Its function is as follows. ATPase which is responsible for recognizing, binding, unfolding and translocation of pupylated proteins into the bacterial 20S proteasome core particle. May be essential for opening the gate of the 20S proteasome via an interaction with its C-terminus, thereby allowing substrate entry and access to the site of proteolysis. Thus, the C-termini of the proteasomal ATPase may function like a 'key in a lock' to induce gate opening and therefore regulate proteolysis. The chain is Proteasome-associated ATPase from Nocardia farcinica (strain IFM 10152).